The following is a 90-amino-acid chain: DNA-binding protein HU (90 aa).

Belongs to the bacterial histone-like protein family. In terms of assembly, homodimer.

Functionally, histone-like DNA-binding protein which is capable of wrapping DNA to stabilize it, and thus to prevent its denaturation under extreme environmental conditions. This Haemophilus influenzae (strain ATCC 51907 / DSM 11121 / KW20 / Rd) protein is DNA-binding protein HU (hup).